Consider the following 88-residue polypeptide: Mitochondrial import inner membrane translocase subunit TIM9 (88 aa).

Residues 35-59 carry the Twin CX3C motif motif; that stretch reads CFDDCVNDFTSNNLTTKETGCITKC. 2 disulfide bridges follow: cysteine 35–cysteine 59 and cysteine 39–cysteine 55.

This sequence belongs to the small Tim family. Heterohexamer; composed of 3 copies of TIM9 and 3 copies of TIM10, named soluble 70 kDa complex. Associates with the TIM22 complex, whose core is composed of TIM22 and TIM54. Interacts with the transmembrane regions of multi-pass transmembrane proteins in transit.

It localises to the mitochondrion inner membrane. Mitochondrial intermembrane chaperone that participates in the import and insertion of multi-pass transmembrane proteins into the mitochondrial inner membrane. Also required for the transfer of beta-barrel precursors from the TOM complex to the sorting and assembly machinery (SAM complex) of the outer membrane. Acts as a chaperone-like protein that protects the hydrophobic precursors from aggregation and guide them through the mitochondrial intermembrane space. The protein is Mitochondrial import inner membrane translocase subunit TIM9 (TIM9) of Debaryomyces hansenii (strain ATCC 36239 / CBS 767 / BCRC 21394 / JCM 1990 / NBRC 0083 / IGC 2968) (Yeast).